A 351-amino-acid polypeptide reads, in one-letter code: Dihydroorotate dehydrogenase (quinone) (351 aa).

Residues 67-71 (AGFDK) and Thr-91 contribute to the FMN site. Position 71 (Lys-71) interacts with substrate. 116 to 120 (NAMGF) contacts substrate. FMN contacts are provided by Asn-145 and Asn-178. Asn-178 serves as a coordination point for substrate. Ser-181 acts as the Nucleophile in catalysis. Asn-183 is a binding site for substrate. 2 residues coordinate FMN: Lys-214 and Thr-242. Residue 243–244 (NT) coordinates substrate. Residues Gly-262, Gly-291, and 312 to 313 (YS) contribute to the FMN site.

The protein belongs to the dihydroorotate dehydrogenase family. Type 2 subfamily. In terms of assembly, monomer. It depends on FMN as a cofactor.

The protein localises to the cell membrane. The catalysed reaction is (S)-dihydroorotate + a quinone = orotate + a quinol. The protein operates within pyrimidine metabolism; UMP biosynthesis via de novo pathway; orotate from (S)-dihydroorotate (quinone route): step 1/1. Its function is as follows. Catalyzes the conversion of dihydroorotate to orotate with quinone as electron acceptor. This Helicobacter pylori (strain Shi470) protein is Dihydroorotate dehydrogenase (quinone).